The following is a 279-amino-acid chain: HTH-type transcriptional regulator HdfR (279 aa).

The HTH lysR-type domain occupies 1–58 (MDTELLKTFLEVSRTRHFGRAAESLYLTQSAVSFRIRQLENQLGVNLFTRHRNNIRLT). The segment at residues 18-37 (FGRAAESLYLTQSAVSFRIR) is a DNA-binding region (H-T-H motif).

This sequence belongs to the LysR transcriptional regulatory family.

In terms of biological role, negatively regulates the transcription of the flagellar master operon flhDC by binding to the upstream region of the operon. In Escherichia coli (strain SE11), this protein is HTH-type transcriptional regulator HdfR.